A 1067-amino-acid polypeptide reads, in one-letter code: Receptor-type guanylate cyclase gcy-10 (1067 aa).

A signal peptide spans 1–20; that stretch reads MLKSLLIIVIVFLHRELCDG. Over 21–438 the chain is Extracellular; sequence IQLILFDNWP…CVAKSSCVNY (418 aa). N-linked (GlcNAc...) asparagine glycosylation is present at asparagine 411. The helical transmembrane segment at 439-459 threads the bilayer; that stretch reads IPHIIAAVVIVTIIVIAIVII. The Cytoplasmic segment spans residues 460-1067; it reads VKQRRHKLNI…RGSIVPLQKA (608 aa). Residues 509–791 enclose the Protein kinase domain; that stretch reads ALTSRRRVFG…ESISTVYPLS (283 aa). Residues 515–523 and lysine 534 contribute to the ATP site; that span reads RVFGSYALV. In terms of domain architecture, Guanylate cyclase spans 859–989; the sequence is TVMFVQICDF…DTVNFASRMQ (131 aa).

This sequence belongs to the adenylyl cyclase class-4/guanylyl cyclase family. Expressed predominantly in AWC but also in AWB, ASI, ASJ and ASK sensory neurons and in I1 interneuron.

It localises to the cell membrane. Its subcellular location is the cell projection. The protein resides in the cilium. It catalyses the reaction GTP = 3',5'-cyclic GMP + diphosphate. In terms of biological role, guanylate cyclase involved in the production of the second messenger cGMP. Regulates chemotaxis responses toward volatile odorants in AWC sensory neurons and their avoidance in AWB sensory neurons. May be involved in sensitivity to quinine by regulating egl-4 activity through the production of cGMP. Involved in phototransduction in ASJ neurons downstream of G protein coupled-photoreceptor lite-1. Required to maintain the expression of putative olfactory receptor str-2 in AWC neurons in adults. In AWB and AWC sensory neurons, mediates the recognition of food oders which subsequently allows for the detection of preferred food sources. Involved in AWB sensory neuron development and extension during postembryonic development, potentially via mediating localization of tub-1 and PI(4,5)P2 to membrane cilia. This is Receptor-type guanylate cyclase gcy-10 from Caenorhabditis elegans.